Here is a 315-residue protein sequence, read N- to C-terminus: Homoserine kinase (315 aa).

Position 97–107 (97–107) interacts with ATP; sequence PPARGLGSSAT.

This sequence belongs to the GHMP kinase family. Homoserine kinase subfamily.

Its subcellular location is the cytoplasm. The catalysed reaction is L-homoserine + ATP = O-phospho-L-homoserine + ADP + H(+). It functions in the pathway amino-acid biosynthesis; L-threonine biosynthesis; L-threonine from L-aspartate: step 4/5. Its function is as follows. Catalyzes the ATP-dependent phosphorylation of L-homoserine to L-homoserine phosphate. The protein is Homoserine kinase of Synechococcus sp. (strain WH7803).